An 898-amino-acid polypeptide reads, in one-letter code: Vacuolar protein sorting-associated protein 41 homolog (898 aa).

The segment covering 1 to 10 has biased composition (basic and acidic residues); it reads MDESNDKENE. The tract at residues 1–35 is disordered; that stretch reads MDESNDKENEFGDSFLEDSGDITRTTEDEDEAPLE. The stretch at 614–756 is one CHCR repeat; the sequence is LRLLLDNADS…VADFPTHFSQ (143 aa). The RING-type; atypical zinc finger occupies 835 to 890; it reads CSLCSQVIMNTGQDMIPRKFNDIKVFKCGHIFHLTCSASEIDRRQMIEDGICIACS.

The protein belongs to the VPS41 family. Probable component of the homotypic fusion and vacuole protein sorting (HOPS) complex consisting of the core class C Vps proteins vps-11, vps-16, vps-18, and which further associates with vps-33.1, vps-39 and vps-41.

The protein resides in the endosome membrane. It localises to the late endosome. The protein localises to the lysosome. It is found in the golgi apparatus. Its subcellular location is the trans-Golgi network. The protein resides in the early endosome. It localises to the cytoplasmic vesicle. The protein localises to the clathrin-coated vesicle. Its function is as follows. Plays a role in vesicle-mediated protein trafficking to lysosomal compartments including the endocytic membrane transport pathways. Believed to act in part as a core component of the putative HOPS endosomal tethering complex which is proposed to be involved in the rab-5-to-rab-7 endosome conversion probably implicating sand-1, and via binding SNAREs and SNARE complexes to mediate tethering and docking events during SNARE-mediated membrane fusion. The HOPS complex is proposed to be recruited to rab-7 on the late endosomal membrane and to regulate late endocytic, phagocytic and autophagic traffic towards lysosomes. Within the HOPS complex, contributes to the normal development of gut granules in the adult intestine. May mediate the tethering of autophagosomes with lysosomes. Has a role in the negative regulation of apoptosis. Required for uptake of exogenous dsRNA which is used in experimental RNA silencing. In Caenorhabditis briggsae, this protein is Vacuolar protein sorting-associated protein 41 homolog.